A 702-amino-acid chain; its full sequence is Transposon Tn7 transposition protein TnsB (702 aa).

The tract at residues 1-139 (MWQINEVVLF…GQTPNALIPD (139 aa)) is DNA-binding domain 1 (DBD1). The H-T-H motif DNA-binding region spans 105-124 (VEHVVQEHKVTKATVYKLLR). Residues 137 to 160 (IPDYKNSGAPGERRSATGTAKIGR) are disordered. Residues 140 to 172 (YKNSGAPGERRSATGTAKIGRAREYGKGEGTKV) are linker 1. Residues 173 to 233 (TPEIERLFRL…QFRYFYDREY (61 aa)) form a DNA-binding domain 2 (DBD2) region. Residues 234-267 (PKAQRLKSRVKAGVYKKDVRPLSSTATSQALGPG) are linker 2. The region spanning 262-480 (QALGPGSRYE…IPVQLWQWGM (219 aa)) is the Integrase catalytic domain. Residues 268-582 (SRYEIDATIA…RSRQFKGLSF (315 aa)) are catalytic domain (CD). The interval 589-702 (QAQEKHNKAN…FQDPPEKDES (114 aa)) is C-terminal domain. The tract at residues 623-702 (KLTPSTTEPK…FQDPPEKDES (80 aa)) is disordered.

In terms of assembly, heteromer with TnsA.

Functionally, sequence-specific, DNA-binding protein required for Tn7 transposition. Recognizes sequences necessary for recombination at both left and right ends of Tn7 and, together with TnsA, forms the transposase. TnsB executes the 3'-DNA strand breakage and joining reactions. TnsB binding introduces DNA bending. There are 3 DNA-binding sites in the left and 4 in the right end of Tn7; as TnsB levels increase more TnsB is bound, suggesting high protein levels contribute to transposon immunity. Binding of TnsB to the transposon right end represses expression of the downstream transposition genes. TnsABC + TnsD promote high-frequency insertion of Tn7 into a specific target site known as att-Tn7 whereas TnsABC + TnsE promote low-frequency insertion into many different sites. The protein is Transposon Tn7 transposition protein TnsB of Escherichia coli.